The chain runs to 118 residues: Holo-[acyl-carrier-protein] synthase (118 aa).

Mg(2+)-binding residues include D6 and E55.

It belongs to the P-Pant transferase superfamily. AcpS family. Mg(2+) serves as cofactor.

Its subcellular location is the cytoplasm. The catalysed reaction is apo-[ACP] + CoA = holo-[ACP] + adenosine 3',5'-bisphosphate + H(+). Transfers the 4'-phosphopantetheine moiety from coenzyme A to a Ser of acyl-carrier-protein. This is Holo-[acyl-carrier-protein] synthase from Chlorobium chlorochromatii (strain CaD3).